Consider the following 157-residue polypeptide: Mitochondrial import inner membrane translocase subunit TIM14 (157 aa).

Over methionine 1 to proline 56 the chain is Mitochondrial intermembrane. Residues valine 57–isoleucine 74 form a helical membrane-spanning segment. The Mitochondrial matrix segment spans residues lysine 75–lysine 157. Residues glutamate 99–lysine 157 enclose the J domain.

This sequence belongs to the TIM14 family. Heterodimer with PAM16. Component of the PAM complex, at least composed of mtHsp70, MGE1, TIM44, PAM16, PAM17 and PAM18.

Its subcellular location is the mitochondrion inner membrane. Essential component of the PAM complex, a complex required for the translocation of transit peptide-containing proteins from the inner membrane into the mitochondrial matrix in an ATP-dependent manner. In the complex, it is required to stimulate activity of mtHSP70 (SSC1). In Candida albicans (strain SC5314 / ATCC MYA-2876) (Yeast), this protein is Mitochondrial import inner membrane translocase subunit TIM14 (PAM18).